Here is a 91-residue protein sequence, read N- to C-terminus: MARSLKKAPFVYDHLMKKVVAILENKSPKRPIKTWSRRSTIYPDFIGLTFQVHNGKAFIDVFVTNDMVGHKLGEFAPTRTFSGHGADKGKK.

This sequence belongs to the universal ribosomal protein uS19 family.

Functionally, protein S19 forms a complex with S13 that binds strongly to the 16S ribosomal RNA. The protein is Small ribosomal subunit protein uS19 of Metamycoplasma arthritidis (strain 158L3-1) (Mycoplasma arthritidis).